The following is a 449-amino-acid chain: Phosphoglucosamine mutase (449 aa).

The active-site Phosphoserine intermediate is the S102. Residues S102, D241, D243, and D245 each coordinate Mg(2+). Position 102 is a phosphoserine (S102).

It belongs to the phosphohexose mutase family. Mg(2+) serves as cofactor. Activated by phosphorylation.

The catalysed reaction is alpha-D-glucosamine 1-phosphate = D-glucosamine 6-phosphate. Its function is as follows. Catalyzes the conversion of glucosamine-6-phosphate to glucosamine-1-phosphate. In Roseobacter denitrificans (strain ATCC 33942 / OCh 114) (Erythrobacter sp. (strain OCh 114)), this protein is Phosphoglucosamine mutase.